Consider the following 276-residue polypeptide: Acyl-[acyl-carrier-protein]--UDP-N-acetylglucosamine O-acyltransferase (276 aa).

It belongs to the transferase hexapeptide repeat family. LpxA subfamily. As to quaternary structure, homotrimer.

It is found in the cytoplasm. It catalyses the reaction a (3R)-hydroxyacyl-[ACP] + UDP-N-acetyl-alpha-D-glucosamine = a UDP-3-O-[(3R)-3-hydroxyacyl]-N-acetyl-alpha-D-glucosamine + holo-[ACP]. Its pathway is glycolipid biosynthesis; lipid IV(A) biosynthesis; lipid IV(A) from (3R)-3-hydroxytetradecanoyl-[acyl-carrier-protein] and UDP-N-acetyl-alpha-D-glucosamine: step 1/6. Involved in the biosynthesis of lipid A, a phosphorylated glycolipid that anchors the lipopolysaccharide to the outer membrane of the cell. The polypeptide is Acyl-[acyl-carrier-protein]--UDP-N-acetylglucosamine O-acyltransferase (Gloeothece citriformis (strain PCC 7424) (Cyanothece sp. (strain PCC 7424))).